The chain runs to 129 residues: Large ribosomal subunit protein uL22 (129 aa).

Belongs to the universal ribosomal protein uL22 family. In terms of assembly, part of the 50S ribosomal subunit.

Functionally, this protein binds specifically to 23S rRNA; its binding is stimulated by other ribosomal proteins, e.g. L4, L17, and L20. It is important during the early stages of 50S assembly. It makes multiple contacts with different domains of the 23S rRNA in the assembled 50S subunit and ribosome. In terms of biological role, the globular domain of the protein is located near the polypeptide exit tunnel on the outside of the subunit, while an extended beta-hairpin is found that lines the wall of the exit tunnel in the center of the 70S ribosome. In Rhizobium etli (strain ATCC 51251 / DSM 11541 / JCM 21823 / NBRC 15573 / CFN 42), this protein is Large ribosomal subunit protein uL22.